The chain runs to 251 residues: uncharacterized protein (251 aa).

A run of 7 helical transmembrane segments spans residues 48–68 (WMVGGVTILTFMALLYLVELI), 88–108 (VLWGISFAPVLHANWQHLVAN), 110–130 (IPLLVLGFLIALAGLSRFIWV), 132–152 (AMVWIFGGSATWLIGNMGSSF), 158–178 (IGVSGLIFGWLAFLLVFGLFV), 184–204 (IIGCMVLFAYGGVLLGVMPVL), and 209–229 (GVSWQGHLCGAISGVVAAYLL).

It to M.tuberculosis Rv1337.

Its subcellular location is the cell membrane. This is an uncharacterized protein from Mycobacterium leprae (strain TN).